A 209-amino-acid chain; its full sequence is High frequency lysogenization protein HflD homolog (209 aa).

The protein belongs to the HflD family.

The protein localises to the cytoplasm. Its subcellular location is the cell inner membrane. This chain is High frequency lysogenization protein HflD homolog, found in Marinomonas sp. (strain MWYL1).